The sequence spans 159 residues: Ribosomal RNA large subunit methyltransferase H (159 aa).

S-adenosyl-L-methionine contacts are provided by residues Leu-76, Gly-108, and 127–132 (FSKMTF).

Belongs to the RNA methyltransferase RlmH family. In terms of assembly, homodimer.

Its subcellular location is the cytoplasm. The enzyme catalyses pseudouridine(1915) in 23S rRNA + S-adenosyl-L-methionine = N(3)-methylpseudouridine(1915) in 23S rRNA + S-adenosyl-L-homocysteine + H(+). In terms of biological role, specifically methylates the pseudouridine at position 1915 (m3Psi1915) in 23S rRNA. The protein is Ribosomal RNA large subunit methyltransferase H of Bifidobacterium animalis subsp. lactis (strain AD011).